The primary structure comprises 589 residues: Guanylate-binding protein 2 (589 aa).

The GTPase domain (Globular) stretch occupies residues 1–309 (MASEIHMLQP…GAISSGSLPC (309 aa)). The region spanning 35–276 (NQPVVVVAIV…FTSYIFSYSA (242 aa)) is the GB1/RHD3-type G domain. GTP-binding positions include 45–52 (GLYRTGKS), 181–182 (RD), and leucine 245. Cysteine 586 is subject to Cysteine methyl ester. Cysteine 586 carries the S-geranylgeranyl cysteine lipid modification. Residues 587–589 (TIL) constitute a propeptide, removed in mature form.

Belongs to the TRAFAC class dynamin-like GTPase superfamily. GB1/RHD3 GTPase family. GB1 subfamily. As to quaternary structure, homodimer; homodimerization occurs upon GTP-binding and is required for the association with membranous structures. Heterodimer with other family members, including GBP1, GBP3, GBP4 and GBP5. Post-translationally, isoprenylation is required for proper subcellular location. As to expression, widely expressed.

The protein resides in the cytoplasmic vesicle membrane. The protein localises to the golgi apparatus membrane. It localises to the cytoplasm. Its subcellular location is the perinuclear region. The enzyme catalyses GTP + H2O = GDP + phosphate + H(+). Interferon (IFN)-inducible GTPase that plays important roles in innate immunity against a diverse range of bacterial, viral and protozoan pathogens. Hydrolyzes GTP to GMP in 2 consecutive cleavage reactions, but the major reaction product is GDP. Following infection, recruited to the pathogen-containing vacuoles or vacuole-escaped bacteria and acts as a positive regulator of inflammasome assembly by promoting the release of inflammasome ligands from bacteria. Acts by promoting lysis of pathogen-containing vacuoles, releasing pathogens into the cytosol. Following pathogen release in the cytosol, promotes recruitment of proteins that mediate bacterial cytolysis: this liberates ligands that are detected by inflammasomes, such as lipopolysaccharide (LPS) that activates the non-canonical CASP4/CASP11 inflammasome or double-stranded DNA (dsDNA) that activates the AIM2 inflammasome. Confers protection to the protozoan pathogen Toxoplasma gondii. Independently of its GTPase activity, acts as an inhibitor of various viruses infectivity by inhibiting FURIN-mediated maturation of viral envelope proteins. In Rattus norvegicus (Rat), this protein is Guanylate-binding protein 2 (Gbp2).